A 425-amino-acid polypeptide reads, in one-letter code: Monoacylglycerol lipase ABHD2 (425 aa).

Residues 1–9 are Cytoplasmic-facing; sequence MNAMLETPE. A helical; Signal-anchor for type II membrane protein transmembrane segment spans residues 10 to 30; the sequence is LPAVFDGVKLAAVAAVLYVIV. The Extracellular portion of the chain corresponds to 31-425; sequence RCLNLKSPTA…DTEQMEAELE (395 aa). One can recognise an AB hydrolase-1 domain in the interval 128–382; sequence MVICPGIANH…HGGHLGFFEG (255 aa). Asn136 carries N-linked (GlcNAc...) asparagine glycosylation. The Nucleophile role is filled by Ser207. Catalysis depends on charge relay system residues Asp345 and His376. An N-linked (GlcNAc...) asparagine glycan is attached at Asn410.

The protein belongs to the AB hydrolase superfamily. AB hydrolase 4 family. In terms of tissue distribution, widely expressed with higher expression in testis. Expressed by vascular smooth muscle cells, non vascular smooth muscle cells and heart.

The protein localises to the cell membrane. It localises to the cytoplasmic vesicle. The protein resides in the secretory vesicle. It is found in the acrosome membrane. It carries out the reaction Hydrolyzes glycerol monoesters of long-chain fatty acids.. It catalyses the reaction an acetyl ester + H2O = an aliphatic alcohol + acetate + H(+). The catalysed reaction is a triacylglycerol + H2O = a diacylglycerol + a fatty acid + H(+). The enzyme catalyses 2-(5Z,8Z,11Z,14Z-eicosatetraenoyl)-glycerol + H2O = glycerol + (5Z,8Z,11Z,14Z)-eicosatetraenoate + H(+). It carries out the reaction a butanoate ester + H2O = an aliphatic alcohol + butanoate + H(+). It catalyses the reaction hexadecanoate ester + H2O = an aliphatic alcohol + hexadecanoate + H(+). Its activity is regulated as follows. Acylglycerol lipase activity is activated upon binding to progesterone. Functionally, progesterone-dependent acylglycerol lipase that catalyzes hydrolysis of endocannabinoid arachidonoylglycerol (AG) from cell membrane. Acts as a progesterone receptor: progesterone-binding activates the acylglycerol lipase activity, mediating degradation of 1-arachidonoylglycerol (1AG) and 2-arachidonoylglycerol (2AG) to glycerol and arachidonic acid (AA). Also displays an ester hydrolase activity against acetyl ester, butanoate ester and hexadecanoate ester. Plays a key role in sperm capacitation in response to progesterone by mediating degradation of 2AG, an inhibitor of the sperm calcium channel CatSper, leading to calcium influx via CatSper and sperm activation. Involved in acrosomal reaction. May also play a role in smooth muscle cells migration. The chain is Monoacylglycerol lipase ABHD2 (Abhd2) from Mus musculus (Mouse).